We begin with the raw amino-acid sequence, 539 residues long: Cytochrome P450 monooxygenase buaD (539 aa).

The signal sequence occupies residues Met1–Gly16. The N-linked (GlcNAc...) asparagine glycan is linked to Asn120. Residue Cys478 participates in heme binding. Asn520 carries an N-linked (GlcNAc...) asparagine glycan.

This sequence belongs to the cytochrome P450 family. The cofactor is heme.

The protein operates within mycotoxin biosynthesis. Cytochrome P450 monooxygenase; part of the gene cluster that mediates the biosynthesis of burnettramic acids, an unusual class of bolaamphiphilic pyrrolizidinediones that display potent antibacterial, antifungal, and cytotoxic activities. The first step of the biosynthesis of burnettramic acids is the hydroxylation of proline by the proline hydroxylase buaE to generate 4-hydroxyproline. The PKS-NRPS buaA and trans-enoyl reductase buaC construct the highly reduced polyketide chain, and the condensation (C) domain of buaA then catalyzes the amide bond formation with the activated 4-hydroxyproline. This is followed by the R domain releasing the nascent polyketide-peptide directly via a Dieckmann condensation to afford a tetramic acid fused to the hydroxyproline, generating the bicyclic pyrrolidinedione moiety. The cytochrome P450 monooxygenases buaD and buaG are likely responsible for the multiple hydroxylations on the polyketide chain and its terminus, although in the heterologous context, buaD does not appear to be required. Therefore, while buaG may be a multifunctional cytochrome P450 monooxygenase, it cannot be ruled out that the two secondary alcohols on the polyketide chain could have an acetate origin. Finally, the glycosyltransferase buaB transfers beta-D-mannose to the aglycone burnettramic acid A to form burnettramic acid A. Burnettramic acid B is a minor cis-pyrrolizidine epimer of burnettramic acid A and it is likely that small amounts of it form naturally in acidic environments. The sequence is that of Cytochrome P450 monooxygenase buaD from Petromyces alliaceus (Aspergillus alliaceus).